The primary structure comprises 375 residues: 23S rRNA (uracil(747)-C(5))-methyltransferase RlmC (375 aa).

Cysteine 3, cysteine 11, cysteine 14, and cysteine 87 together coordinate [4Fe-4S] cluster. Glutamine 212, phenylalanine 241, glutamate 262, and asparagine 307 together coordinate S-adenosyl-L-methionine. Cysteine 334 serves as the catalytic Nucleophile.

Belongs to the class I-like SAM-binding methyltransferase superfamily. RNA M5U methyltransferase family. RlmC subfamily.

It carries out the reaction uridine(747) in 23S rRNA + S-adenosyl-L-methionine = 5-methyluridine(747) in 23S rRNA + S-adenosyl-L-homocysteine + H(+). Its function is as follows. Catalyzes the formation of 5-methyl-uridine at position 747 (m5U747) in 23S rRNA. The polypeptide is 23S rRNA (uracil(747)-C(5))-methyltransferase RlmC (Xenorhabdus nematophila (strain ATCC 19061 / DSM 3370 / CCUG 14189 / LMG 1036 / NCIMB 9965 / AN6)).